Here is a 228-residue protein sequence, read N- to C-terminus: Large ribosomal subunit protein uL3 (228 aa).

Residues 135–159 are disordered; that stretch reads MKSQRASHGNSRSHNVPGSIGMAQD. The segment covering 140-150 has biased composition (polar residues); sequence ASHGNSRSHNV. An N5-methylglutamine modification is found at Gln-158.

Belongs to the universal ribosomal protein uL3 family. Part of the 50S ribosomal subunit. Forms a cluster with proteins L14 and L19. Methylated by PrmB.

Its function is as follows. One of the primary rRNA binding proteins, it binds directly near the 3'-end of the 23S rRNA, where it nucleates assembly of the 50S subunit. The sequence is that of Large ribosomal subunit protein uL3 from Albidiferax ferrireducens (strain ATCC BAA-621 / DSM 15236 / T118) (Rhodoferax ferrireducens).